The primary structure comprises 387 residues: EARP-interacting protein homolog (387 aa).

WD repeat units lie at residues 132–172 (SAHG…AKAT), 182–222 (KGQL…QIYC), 226–266 (AHGQ…EPVK), and 270–310 (EHSH…SEPF). The segment at 309-337 (PFGHLVDDDDLSDPEENQQEDKGKEPLQD) is disordered. Positions 315–326 (DDDDLSDPEENQ) are enriched in acidic residues. The stretch at 345–385 (EHEDSVYAVEWSAADPWLFASLSYDGRLVINRVPRALKYRI) is one WD 5 repeat.

This sequence belongs to the WD repeat EIPR1 family.

The protein resides in the golgi apparatus. It localises to the trans-Golgi network. May act as a component of endosomal retrieval machinery that is involved in protein transport from early endosomes to either recycling endosomes or the trans-Golgi network. In Danio rerio (Zebrafish), this protein is EARP-interacting protein homolog.